The primary structure comprises 149 residues: Calmodulin-2 (149 aa).

The residue at position 2 (A2) is an N-acetylalanine. 4 EF-hand domains span residues 8–43 (EQIA…LGQN), 44–79 (PTEA…KMKD), 81–116 (DSEE…LGEK), and 117–149 (LTDE…MMAK). Residues D21, D23, D25, C27, E32, D57, D59, N61, T63, E68, D94, D96, N98, and E105 each contribute to the Ca(2+) site. K116 is subject to N6,N6,N6-trimethyllysine. D130, D132, D134, Q136, and E141 together coordinate Ca(2+).

The protein belongs to the calmodulin family.

Calmodulin mediates the control of a large number of enzymes, ion channels and other proteins by Ca(2+). Among the enzymes to be stimulated by the calmodulin-Ca(2+) complex are a number of protein kinases and phosphatases. This is Calmodulin-2 (CAM2) from Oryza sativa subsp. indica (Rice).